A 417-amino-acid chain; its full sequence is Gamma-glutamyl phosphate reductase (417 aa).

The protein belongs to the gamma-glutamyl phosphate reductase family.

It localises to the cytoplasm. The enzyme catalyses L-glutamate 5-semialdehyde + phosphate + NADP(+) = L-glutamyl 5-phosphate + NADPH + H(+). It functions in the pathway amino-acid biosynthesis; L-proline biosynthesis; L-glutamate 5-semialdehyde from L-glutamate: step 2/2. Its function is as follows. Catalyzes the NADPH-dependent reduction of L-glutamate 5-phosphate into L-glutamate 5-semialdehyde and phosphate. The product spontaneously undergoes cyclization to form 1-pyrroline-5-carboxylate. The protein is Gamma-glutamyl phosphate reductase of Meiothermus ruber.